A 458-amino-acid polypeptide reads, in one-letter code: F-box/WD repeat-containing protein 9 (458 aa).

Position 1 is an N-acetylmethionine (methionine 1). Disordered stretches follow at residues 1–30 and 42–64; these read MELPLGRCDDSRTWDDDSDPESETDPDAQA and KSGLAFSRPSQLSTPAASPSASE. Positions 16-26 are enriched in acidic residues; that stretch reads DDSDPESETDP. Phosphoserine is present on serine 18. Threonine 55 is subject to Phosphothreonine. The residue at position 59 (serine 59) is a Phosphoserine. The F-box domain occupies 76 to 123; the sequence is EPGLLSLPPELLLEICSYLDARLVLHVLSRVCHALRDLVSDHVTWRLR. WD repeat units lie at residues 171–210, 220–261, 264–301, 305–342, 344–381, 387–424, and 427–458; these read GHVASVDSVLLLQGGSLCLSGSRDRNVNLWDLRQLGTESN, KRNS…QQFG, KASSAVLCLSYLPDILVTGTYDKKVTIYDPRAGPALLK, LHSRPVLTLLADDRHIISGSEDHTLVVVDRRANSVLQR, QLDSYLLCMSYQEPQLWAGDNQGLLHVFANRNGCFQLI, GHSFPITGIQYSVGALYTTSTDKTIRVHVPTDPPRTIC, and RHDNGLNRVCAEGNLVVAGSGDLSLEVWRLQA.

As to quaternary structure, interacts with SKP1 and CUL1.

Substrate-recognition component of the SCF (SKP1-CUL1-F-box protein)-type E3 ubiquitin ligase complex. This chain is F-box/WD repeat-containing protein 9 (FBXW9), found in Homo sapiens (Human).